Reading from the N-terminus, the 346-residue chain is Cell division protein ZipA (346 aa).

Residues methionine 1–leucine 6 are Periplasmic-facing. A helical transmembrane segment spans residues valine 7–isoleucine 27. The Cytoplasmic segment spans residues arginine 28–alanine 346. Disordered regions lie at residues alanine 76–glutamate 103 and glutamine 121–proline 145.

The protein belongs to the ZipA family. In terms of assembly, interacts with FtsZ via their C-terminal domains.

Its subcellular location is the cell inner membrane. In terms of biological role, essential cell division protein that stabilizes the FtsZ protofilaments by cross-linking them and that serves as a cytoplasmic membrane anchor for the Z ring. Also required for the recruitment to the septal ring of downstream cell division proteins. The chain is Cell division protein ZipA from Shewanella sp. (strain MR-7).